Consider the following 167-residue polypeptide: Phosphopantetheine adenylyltransferase (167 aa).

Residue T9 participates in substrate binding. ATP contacts are provided by residues 9–10 and H17; that span reads TF. Substrate contacts are provided by K41, L73, and R87. ATP is bound by residues 88–90, E98, and 123–129; these read GLR and YQFISGT.

This sequence belongs to the bacterial CoaD family. Homohexamer. It depends on Mg(2+) as a cofactor.

It localises to the cytoplasm. The catalysed reaction is (R)-4'-phosphopantetheine + ATP + H(+) = 3'-dephospho-CoA + diphosphate. It functions in the pathway cofactor biosynthesis; coenzyme A biosynthesis; CoA from (R)-pantothenate: step 4/5. Reversibly transfers an adenylyl group from ATP to 4'-phosphopantetheine, yielding dephospho-CoA (dPCoA) and pyrophosphate. The protein is Phosphopantetheine adenylyltransferase of Bordetella avium (strain 197N).